The following is a 274-amino-acid chain: NAD kinase (274 aa).

D60 functions as the Proton acceptor in the catalytic mechanism. NAD(+) is bound by residues 60–61 (DG), K65, 127–128 (NE), and R152.

It belongs to the NAD kinase family. The cofactor is a divalent metal cation.

It localises to the cytoplasm. The enzyme catalyses NAD(+) + ATP = ADP + NADP(+) + H(+). Involved in the regulation of the intracellular balance of NAD and NADP, and is a key enzyme in the biosynthesis of NADP. Catalyzes specifically the phosphorylation on 2'-hydroxyl of the adenosine moiety of NAD to yield NADP. This is NAD kinase from Mycoplasmoides gallisepticum (strain R(low / passage 15 / clone 2)) (Mycoplasma gallisepticum).